A 549-amino-acid chain; its full sequence is Cobalt-dependent inorganic pyrophosphatase (549 aa).

CBS domains lie at 74 to 130 (EMDK…IWDS) and 252 to 310 (MTKD…VIQV). Residues K100, 116 to 119 (STSN), T253, V258, and 278 to 280 (YSN) each bind AMP.

This sequence belongs to the PPase family. As to quaternary structure, homodimer. Requires Co(2+) as cofactor. It depends on Mn(2+) as a cofactor. The cofactor is Mg(2+).

The enzyme catalyses diphosphate + H2O = 2 phosphate + H(+). Its activity is regulated as follows. Inhibited by AMP and ADP with 25% and 35% of activity remaining, respectively, at saturating conditions. Activated 5-fold by diadenosine polyphosphates(Ap[n]A) with n&gt;2 (Ap3A, Ap4A, Ap5A, Ap6A) at saturating conditions. The protein is Cobalt-dependent inorganic pyrophosphatase of Clostridium perfringens (strain 13 / Type A).